We begin with the raw amino-acid sequence, 230 residues long: U2 small nuclear ribonucleoprotein A' (230 aa).

LRR repeat units lie at residues Lys19 to Pro40, Arg41 to Ser62, and Gly65 to Arg86. The 39-residue stretch at Asn99 to Leu137 folds into the LRRCT domain. The segment at Gly211–Leu230 is disordered. Gly residues predominate over residues Ile213–Asn223.

This sequence belongs to the U2 small nuclear ribonucleoprotein A family. In terms of assembly, associated with the spliceosome.

The protein localises to the nucleus. Functionally, involved in pre-mRNA splicing. This Emericella nidulans (strain FGSC A4 / ATCC 38163 / CBS 112.46 / NRRL 194 / M139) (Aspergillus nidulans) protein is U2 small nuclear ribonucleoprotein A' (lea1).